A 265-amino-acid polypeptide reads, in one-letter code: Glutamate racemase (265 aa).

Substrate is bound by residues 12–13 and 44–45; these read DS and YG. The active-site Proton donor/acceptor is Cys75. Residue 76 to 77 participates in substrate binding; sequence NT. Cys186 functions as the Proton donor/acceptor in the catalytic mechanism. 187–188 serves as a coordination point for substrate; it reads TH.

This sequence belongs to the aspartate/glutamate racemases family.

It catalyses the reaction L-glutamate = D-glutamate. The protein operates within cell wall biogenesis; peptidoglycan biosynthesis. Provides the (R)-glutamate required for cell wall biosynthesis. The chain is Glutamate racemase from Pseudomonas putida (strain ATCC 47054 / DSM 6125 / CFBP 8728 / NCIMB 11950 / KT2440).